The primary structure comprises 670 residues: Probable metal-nicotianamine transporter YSL4 (670 aa).

13 helical membrane passes run 35-55 (ITIR…IITH), 59-79 (LTIG…FFFI), 107-127 (CVVS…LIAM), 151-171 (GLWW…FCLV), 273-293 (LVNC…WPFI), 318-338 (VFIA…KIIV), 389-409 (FAVS…PLIF), 416-436 (FVLC…YGAG), 450-470 (GLFI…GLAA), 507-527 (LGTA…WTAF), 559-579 (PKHC…VNLI), 601-621 (FYIG…MLVW), and 636-656 (VASG…ILSI).

The protein belongs to the YSL (TC 2.A.67.2) family.

Its subcellular location is the membrane. May be involved in the transport of nicotianamine-chelated metals. The polypeptide is Probable metal-nicotianamine transporter YSL4 (YSL4) (Arabidopsis thaliana (Mouse-ear cress)).